A 101-amino-acid polypeptide reads, in one-letter code: MSDQEAKPSTEDLGDKKEGEYIKLKVIGQDSSEIHFKVKMTTHLKKLKESYCQRQGVPMNSLRFLFEGQRIADNHTPKELGMEEEDVIEVYHEQTGGHSTV.

At S2 the chain carries N-acetylserine. Phosphoserine is present on S2. K7 participates in a covalent cross-link: Glycyl lysine isopeptide (Lys-Gly) (interchain with G-Cter in SUMO1); alternate. Residue K7 forms a Glycyl lysine isopeptide (Lys-Gly) (interchain with G-Cter in SUMO2); alternate linkage. S9 carries the post-translational modification Phosphoserine. Glycyl lysine isopeptide (Lys-Gly) (interchain with G-Cter in SUMO2) cross-links involve residues K16, K17, and K23. The Ubiquitin-like domain occupies 20–97 (EYIKLKVIGQ…IEVYHEQTGG (78 aa)). K25 is covalently cross-linked (Glycyl lysine isopeptide (Lys-Gly) (interchain with G-Cter in SUMO1)). Phosphoserine is present on S32. Glycyl lysine isopeptide (Lys-Gly) (interchain with G-Cter in SUMO2) cross-links involve residues K37, K39, K45, and K46. A Glycyl lysine isopeptide (Gly-Lys) (interchain with K-? in acceptor proteins) cross-link involves residue G97. The propeptide occupies 98-101 (HSTV).

It belongs to the ubiquitin family. SUMO subfamily. As to quaternary structure, covalently attached to KCNB1; UBE2I increases cross-linking with KCNB1 and PIAS1 decreases cross-links with KCNB1. Interacts with SAE2, RANBP2, PIAS1 and PIAS2. Interacts with PRKN. Covalently attached to a number of proteins such as IKFZ1, PML, RANGAP1, HIPK2, SP100, p53, p73-alpha, MDM2, JUN, DNMT3B and TDG. Also interacts with HIF1A, HIPK2, HIPK3, CHD3, EXOSC9, RAD51 and RAD52. Interacts with USP25 (via ts SIM domain); the interaction weakly sumoylates USP25. Interacts with SIMC1, CASP8AP2, RNF111 and SOBP (via SIM domains). Interacts with BHLHE40/DEC1. Interacts with RWDD3. Interacts with UBE2I/UBC9 and this interaction is enhanced in the presence of RWDD3. Interacts with MTA1. Interacts with SENP2. Interacts with HINT1. Post-translationally, cleavage of precursor form by SENP1, SENP2 is necessary for function. In terms of processing, polymeric SUMO1 chains undergo polyubiquitination by RNF4.

It is found in the nucleus membrane. It localises to the nucleus speckle. The protein localises to the cytoplasm. The protein resides in the nucleus. Its subcellular location is the PML body. It is found in the cell membrane. In terms of biological role, ubiquitin-like protein that can be covalently attached to proteins as a monomer or a lysine-linked polymer. Covalent attachment via an isopeptide bond to its substrates requires prior activation by the E1 complex SAE1-SAE2 and linkage to the E2 enzyme UBE2I, and can be promoted by E3 ligases such as PIAS1-4, RANBP2 or CBX4. This post-translational modification on lysine residues of proteins plays a crucial role in a number of cellular processes such as nuclear transport, DNA replication and repair, mitosis and signal transduction. Involved for instance in targeting RANGAP1 to the nuclear pore complex protein RANBP2. Covalently attached to the voltage-gated potassium channel KCNB1; this modulates the gating characteristics of KCNB1. Polymeric SUMO1 chains are also susceptible to polyubiquitination which functions as a signal for proteasomal degradation of modified proteins. May also regulate a network of genes involved in palate development. Covalently attached to ZFHX3. In Cervus nippon (Sika deer), this protein is Small ubiquitin-related modifier 1 (SUMO1).